A 307-amino-acid chain; its full sequence is Glycerol-3-phosphate dehydrogenase [NAD(P)+] (307 aa).

W14, R34, R35, and K82 together coordinate NADPH. K82 and G110 together coordinate sn-glycerol 3-phosphate. S114 is an NADPH binding site. Sn-glycerol 3-phosphate-binding residues include K165, D218, S228, R229, and N230. Residue K165 is the Proton acceptor of the active site. R229 is an NADPH binding site. E255 is an NADPH binding site.

The protein belongs to the NAD-dependent glycerol-3-phosphate dehydrogenase family.

It localises to the cytoplasm. It catalyses the reaction sn-glycerol 3-phosphate + NAD(+) = dihydroxyacetone phosphate + NADH + H(+). It carries out the reaction sn-glycerol 3-phosphate + NADP(+) = dihydroxyacetone phosphate + NADPH + H(+). Its pathway is membrane lipid metabolism; glycerophospholipid metabolism. Functionally, catalyzes the reduction of the glycolytic intermediate dihydroxyacetone phosphate (DHAP) to sn-glycerol 3-phosphate (G3P), the key precursor for phospholipid synthesis. In Nostoc sp. (strain PCC 7120 / SAG 25.82 / UTEX 2576), this protein is Glycerol-3-phosphate dehydrogenase [NAD(P)+].